We begin with the raw amino-acid sequence, 182 residues long: MGIHAEQPKESIEEQIQRLCATVPDYPEPGITFRDLTPVFADGAALRAVVDALVEPFAGQFDAVAGVEARGFLLAAAAAYATGTGVITVRKAGKLPRAVYTEHYSLEYGTAALELHRDDLPAGSRVLILDDVLATGGTLAATSKLFAKAGVNVAGYGVVLELAELHGREALAGHQIRSLVRL.

It belongs to the purine/pyrimidine phosphoribosyltransferase family. As to quaternary structure, homodimer.

Its subcellular location is the cytoplasm. The catalysed reaction is AMP + diphosphate = 5-phospho-alpha-D-ribose 1-diphosphate + adenine. Its pathway is purine metabolism; AMP biosynthesis via salvage pathway; AMP from adenine: step 1/1. Functionally, catalyzes a salvage reaction resulting in the formation of AMP, that is energically less costly than de novo synthesis. The sequence is that of Adenine phosphoribosyltransferase from Renibacterium salmoninarum (strain ATCC 33209 / DSM 20767 / JCM 11484 / NBRC 15589 / NCIMB 2235).